We begin with the raw amino-acid sequence, 301 residues long: Envoplakin-like protein (301 aa).

A coiled-coil region spans residues 1-88 (MQASADQVER…ERVTQECAEY (88 aa)). Disordered stretches follow at residues 18–41 (RLQQ…TGSS) and 118–166 (GLRR…PEPI). The span at 26–41 (SEQSQALQHQQETGSS) shows a compositional bias: polar residues. The span at 136–151 (GAQHRAEGDQRPRRAA) shows a compositional bias: basic and acidic residues.

This sequence belongs to the plakin or cytolinker family.

This chain is Envoplakin-like protein (EVPLL), found in Homo sapiens (Human).